Consider the following 141-residue polypeptide: Hemoglobin subunit alpha-D (141 aa).

The Globin domain maps to 1–141 (MLTADDKKLL…VAAVLAEKYR (141 aa)). Residues His58 and His87 each contribute to the heme b site.

It belongs to the globin family. As to quaternary structure, heterotetramer of two alpha-D chains and two beta chains. In terms of tissue distribution, red blood cells.

Its function is as follows. Involved in oxygen transport from the lung to the various peripheral tissues. This chain is Hemoglobin subunit alpha-D (HBAD), found in Anser anser anser (Western greylag goose).